The following is a 346-amino-acid chain: Tyrosine--tRNA ligase (346 aa).

Tyr35 provides a ligand contact to L-tyrosine. The short motif at 40–48 (PTGEMHIGH) is the 'HIGH' region element. The L-tyrosine site is built by Tyr162, Gln166, Asp169, and Gln184.

This sequence belongs to the class-I aminoacyl-tRNA synthetase family. TyrS type 3 subfamily. As to quaternary structure, homodimer.

It is found in the cytoplasm. It catalyses the reaction tRNA(Tyr) + L-tyrosine + ATP = L-tyrosyl-tRNA(Tyr) + AMP + diphosphate + H(+). Functionally, catalyzes the attachment of tyrosine to tRNA(Tyr) in a two-step reaction: tyrosine is first activated by ATP to form Tyr-AMP and then transferred to the acceptor end of tRNA(Tyr). The polypeptide is Tyrosine--tRNA ligase (Haloarcula marismortui (strain ATCC 43049 / DSM 3752 / JCM 8966 / VKM B-1809) (Halobacterium marismortui)).